A 310-amino-acid chain; its full sequence is p-hydroxybenzoic acid efflux pump subunit AaeA (310 aa).

The helical transmembrane segment at 12–32 (AITLVLVILAFIAIFRAWVYY) threads the bilayer.

The protein belongs to the membrane fusion protein (MFP) (TC 8.A.1) family.

It is found in the cell inner membrane. Its function is as follows. Forms an efflux pump with AaeB. The protein is p-hydroxybenzoic acid efflux pump subunit AaeA of Salmonella arizonae (strain ATCC BAA-731 / CDC346-86 / RSK2980).